Reading from the N-terminus, the 296-residue chain is Mitochondrial arginine transporter BAC2 (296 aa).

Solcar repeat units lie at residues 13–93, 104–187, and 198–282; these read GREF…FSRS, PSYR…VRER, and ENLR…ALRC. 6 consecutive transmembrane segments (helical) span residues 16–36, 70–90, 110–130, 162–181, 204–224, and 260–280; these read FVAG…LDTL, AAPL…YAIF, ALGG…VELI, GLTI…FWTY, LVAG…LDVV, and TAVA…EVAL.

This sequence belongs to the mitochondrial carrier (TC 2.A.29) family. As to expression, high expression in flowers, stamens, petals and pollen. Expressed in roots, leaves and stems.

The protein resides in the mitochondrion inner membrane. With respect to regulation, inhibited by mercuric chloride. Mitochondrial arginine transporter that catalyzes the counter-exchange of arginine with lysine, ornithine, arginine, histidine and citrulline. Substrate preference in reconstituted proteoliposomes is arginine &gt; homoarginine &gt; citrulline &gt; histidine &gt; lysine &gt; ornithine. May be involved in the delivery of arginine, released from seed reserves, to mitochondrial arginase and the export of ornithine. May contribute to proline accumulation in response to hyperosmotic stress. The chain is Mitochondrial arginine transporter BAC2 (BAC2) from Arabidopsis thaliana (Mouse-ear cress).